A 1082-amino-acid polypeptide reads, in one-letter code: SURP and G-patch domain-containing protein 2 (1082 aa).

Position 7 is a phosphothreonine (Thr7). Residues 65 to 97 (LSGSVAHSRDAGREGLRSDVFPGPSFRSSNPSI) are disordered. Basic and acidic residues predominate over residues 71–81 (HSRDAGREGLR). 2 positions are modified to phosphoserine: Ser96 and Ser224. Lys228 participates in a covalent cross-link: Glycyl lysine isopeptide (Lys-Gly) (interchain with G-Cter in SUMO2). Thr275 carries the post-translational modification Phosphothreonine. At Ser277 the chain carries Phosphoserine. Residue Lys305 forms a Glycyl lysine isopeptide (Lys-Gly) (interchain with G-Cter in SUMO2) linkage. Phosphoserine occurs at positions 315, 573, and 603. The stretch at 590–633 (IDQLVKRVIEGSLSPKERTLLKEDPAYWFLSDENSLEYKYYKLK) is one SURP motif 1 repeat. Residue Lys650 forms a Glycyl lysine isopeptide (Lys-Gly) (interchain with G-Cter in SUMO2) linkage. The tract at residues 694–779 (RRATTGTQTL…QTSSPCPSAD (86 aa)) is disordered. A compositionally biased stretch (low complexity) spans 697–708 (TTGTQTLLSSGT). Residues 727–738 (LPDRNDAAKDCP) show a composition bias toward basic and acidic residues. Residues Ser754 and Ser757 each carry the phosphoserine modification. An SURP motif 2 repeat occupies 787 to 830 (TAEKLARFVAQVGPEIEQFSIENSTDNPDLWFLHDQNSSAFKFY). Disordered regions lie at residues 849 to 930 (NLHT…EAAE), 982 to 1002 (RIAY…PKDL), and 1030 to 1061 (LGSL…EHKE). At Ser863 the chain carries Phosphoserine. 2 stretches are compositionally biased toward acidic residues: residues 868–877 (MEGEAEFEDE) and 885–904 (LESP…DGGE). Basic residues predominate over residues 990–999 (GRPMSKKKKP). A Nuclear localization signal motif is present at residues 995–1000 (KKKKPK). Residues 1011–1057 (DKNLGFQMLQKMGWKEGHGLGSLGKGIREPVSVGTPSEGEGLGADGQ) form the G-patch domain.

As to expression, detected in adult testis, and in fetal brain and kidney.

It localises to the nucleus. May play a role in mRNA splicing. This is SURP and G-patch domain-containing protein 2 (SUGP2) from Homo sapiens (Human).